Consider the following 581-residue polypeptide: mRNA-decapping enzyme 1B (581 aa).

Position 145 is a phosphoserine (serine 145). 2 disordered regions span residues 181-222 and 236-258; these read QISS…PEPQ and APCQ…PEKF. Residues 204–219 are compositionally biased toward polar residues; it reads GSRQQRGPRPGQTSDP. Positions 244–255 are enriched in low complexity; sequence PPQTLPLQQQQP. Phosphoserine is present on residues serine 269 and serine 326. The segment at 349 to 411 is disordered; it reads AENRCEPGAP…HQPVTGPGEV (63 aa). The segment covering 355–367 has biased composition (low complexity); sequence PGAPAPASSATTP. The residue at position 366 (threonine 366) is a Phosphothreonine. A compositionally biased stretch (polar residues) spans 368–381; it reads VSLAQPTRLSSALP. Residues 382–401 show a composition bias toward pro residues; the sequence is PQTPGPRALPRPAPPGPGPG. Serine 412 is subject to Phosphoserine. Positions 427–468 are disordered; it reads QQLPAPGRPALAAKFPTATLSTRARNPLEPWRDPPPSTEQPA. At serine 475 the chain carries Phosphoserine. A disordered region spans residues 498–522; it reads SWAPPQERSRAPLPPGNQDPAATPT.

The protein belongs to the DCP1 family. As to quaternary structure, interacts with DCP1A.

It is found in the cytoplasm. The protein resides in the nucleus. The catalysed reaction is a 5'-end (N(7)-methyl 5'-triphosphoguanosine)-ribonucleoside in mRNA + H2O = N(7)-methyl-GDP + a 5'-end phospho-ribonucleoside in mRNA + 2 H(+). Its function is as follows. May play a role in the degradation of mRNAs, both in normal mRNA turnover and in nonsense-mediated mRNA decay. May remove the 7-methyl guanine cap structure from mRNA molecules, yielding a 5'-phosphorylated mRNA fragment and 7m-GDP. The protein is mRNA-decapping enzyme 1B (DCP1B) of Bos taurus (Bovine).